Reading from the N-terminus, the 273-residue chain is Shikimate dehydrogenase (NADP(+)) (273 aa).

Residues 14–16 (SKS) and Thr-61 each bind shikimate. Lys-65 acts as the Proton acceptor in catalysis. The shikimate site is built by Asn-86 and Asp-102. NADP(+) contacts are provided by residues 126 to 130 (GAGGA), 150 to 155 (NRTHAR), and Met-213. Residue Tyr-215 participates in shikimate binding. Gly-237 contacts NADP(+).

This sequence belongs to the shikimate dehydrogenase family. As to quaternary structure, homodimer.

It carries out the reaction shikimate + NADP(+) = 3-dehydroshikimate + NADPH + H(+). It functions in the pathway metabolic intermediate biosynthesis; chorismate biosynthesis; chorismate from D-erythrose 4-phosphate and phosphoenolpyruvate: step 4/7. Its function is as follows. Involved in the biosynthesis of the chorismate, which leads to the biosynthesis of aromatic amino acids. Catalyzes the reversible NADPH linked reduction of 3-dehydroshikimate (DHSA) to yield shikimate (SA). The protein is Shikimate dehydrogenase (NADP(+)) of Aeromonas hydrophila subsp. hydrophila (strain ATCC 7966 / DSM 30187 / BCRC 13018 / CCUG 14551 / JCM 1027 / KCTC 2358 / NCIMB 9240 / NCTC 8049).